We begin with the raw amino-acid sequence, 374 residues long: Protein RecA (374 aa).

66 to 73 contributes to the ATP binding site; that stretch reads GPESSGKT. A disordered region spans residues 327-374; that stretch reads LGVGVHPEESATEPGADAASAAPADAAPAVPAPTTAKATKSKAAAAKS. Residues 338-374 show a composition bias toward low complexity; that stretch reads TEPGADAASAAPADAAPAVPAPTTAKATKSKAAAAKS.

The protein belongs to the RecA family.

Its subcellular location is the cytoplasm. Functionally, can catalyze the hydrolysis of ATP in the presence of single-stranded DNA, the ATP-dependent uptake of single-stranded DNA by duplex DNA, and the ATP-dependent hybridization of homologous single-stranded DNAs. It interacts with LexA causing its activation and leading to its autocatalytic cleavage. In Streptomyces lividans, this protein is Protein RecA.